Reading from the N-terminus, the 309-residue chain is Homoserine kinase (309 aa).

91-101 (PIGSGLGSSAC) is a binding site for ATP.

This sequence belongs to the GHMP kinase family. Homoserine kinase subfamily.

Its subcellular location is the cytoplasm. The enzyme catalyses L-homoserine + ATP = O-phospho-L-homoserine + ADP + H(+). Its pathway is amino-acid biosynthesis; L-threonine biosynthesis; L-threonine from L-aspartate: step 4/5. Catalyzes the ATP-dependent phosphorylation of L-homoserine to L-homoserine phosphate. In Escherichia fergusonii (strain ATCC 35469 / DSM 13698 / CCUG 18766 / IAM 14443 / JCM 21226 / LMG 7866 / NBRC 102419 / NCTC 12128 / CDC 0568-73), this protein is Homoserine kinase.